We begin with the raw amino-acid sequence, 46 residues long: uncharacterized protein (46 aa).

This is an uncharacterized protein from Dictyostelium discoideum (Social amoeba).